Reading from the N-terminus, the 964-residue chain is Isoleucine--tRNA ligase (964 aa).

The 'HIGH' region signature appears at 66–76 (PYANGDIHIGH). Glu-596 is a binding site for L-isoleucyl-5'-AMP. The short motif at 637–641 (KMSKS) is the 'KMSKS' region element. Lys-640 is an ATP binding site. Zn(2+) contacts are provided by Cys-927, Cys-930, Cys-947, and Cys-950.

The protein belongs to the class-I aminoacyl-tRNA synthetase family. IleS type 1 subfamily. In terms of assembly, monomer. Zn(2+) is required as a cofactor.

It localises to the cytoplasm. It carries out the reaction tRNA(Ile) + L-isoleucine + ATP = L-isoleucyl-tRNA(Ile) + AMP + diphosphate. Catalyzes the attachment of isoleucine to tRNA(Ile). As IleRS can inadvertently accommodate and process structurally similar amino acids such as valine, to avoid such errors it has two additional distinct tRNA(Ile)-dependent editing activities. One activity is designated as 'pretransfer' editing and involves the hydrolysis of activated Val-AMP. The other activity is designated 'posttransfer' editing and involves deacylation of mischarged Val-tRNA(Ile). This Cupriavidus necator (strain ATCC 17699 / DSM 428 / KCTC 22496 / NCIMB 10442 / H16 / Stanier 337) (Ralstonia eutropha) protein is Isoleucine--tRNA ligase.